The following is a 132-amino-acid chain: Small ribosomal subunit protein uS8 (132 aa).

Belongs to the universal ribosomal protein uS8 family. In terms of assembly, part of the 30S ribosomal subunit. Contacts proteins S5 and S12.

Its function is as follows. One of the primary rRNA binding proteins, it binds directly to 16S rRNA central domain where it helps coordinate assembly of the platform of the 30S subunit. The sequence is that of Small ribosomal subunit protein uS8 from Streptococcus gordonii (strain Challis / ATCC 35105 / BCRC 15272 / CH1 / DL1 / V288).